The following is a 197-amino-acid chain: Cytochrome c biogenesis ATP-binding export protein CcmA (197 aa).

Positions 1-196 (MSMLSLHQLQ…VIKSAQILQL (196 aa)) constitute an ABC transporter domain. 35–42 (GANGSGKS) is an ATP binding site.

This sequence belongs to the ABC transporter superfamily. CcmA exporter (TC 3.A.1.107) family. In terms of assembly, the complex is composed of two ATP-binding proteins (CcmA) and two transmembrane proteins (CcmB).

It localises to the cell inner membrane. It carries out the reaction heme b(in) + ATP + H2O = heme b(out) + ADP + phosphate + H(+). Functionally, part of the ABC transporter complex CcmAB involved in the biogenesis of c-type cytochromes; once thought to export heme, this seems not to be the case, but its exact role is uncertain. Responsible for energy coupling to the transport system. The chain is Cytochrome c biogenesis ATP-binding export protein CcmA from Rickettsia typhi (strain ATCC VR-144 / Wilmington).